A 325-amino-acid polypeptide reads, in one-letter code: tRNA N6-adenosine threonylcarbamoyltransferase (325 aa).

The Fe cation site is built by H111 and H115. Substrate is bound by residues 134–138 (LISGG), D167, G180, and N277. Residue D305 participates in Fe cation binding.

It belongs to the KAE1 / TsaD family. Requires Fe(2+) as cofactor.

Its subcellular location is the cytoplasm. It is found in the secreted. The catalysed reaction is L-threonylcarbamoyladenylate + adenosine(37) in tRNA = N(6)-L-threonylcarbamoyladenosine(37) in tRNA + AMP + H(+). Required for the formation of a threonylcarbamoyl group on adenosine at position 37 (t(6)A37) in tRNAs that read codons beginning with adenine. Is involved in the transfer of the threonylcarbamoyl moiety of threonylcarbamoyl-AMP (TC-AMP) to the N6 group of A37, together with TsaE and TsaB. TsaD likely plays a direct catalytic role in this reaction. The protein is tRNA N6-adenosine threonylcarbamoyltransferase of Mannheimia haemolytica (Pasteurella haemolytica).